Here is a 143-residue protein sequence, read N- to C-terminus: Fluoride-specific ion channel FluC 1 (143 aa).

The next 4 membrane-spanning stretches (helical) occupy residues 13 to 33 (VLVG…SVIA), 42 to 62 (GVPW…ATLL), 80 to 100 (LCIG…TVEA), and 111 to 131 (WGIA…WVVI). Na(+) is bound by residues glycine 88 and threonine 91.

Belongs to the fluoride channel Fluc/FEX (TC 1.A.43) family.

The protein resides in the cell membrane. The catalysed reaction is fluoride(in) = fluoride(out). With respect to regulation, na(+) is not transported, but it plays an essential structural role and its presence is essential for fluoride channel function. In terms of biological role, fluoride-specific ion channel. Important for reducing fluoride concentration in the cell, thus reducing its toxicity. The chain is Fluoride-specific ion channel FluC 1 from Cutibacterium acnes (strain DSM 16379 / KPA171202) (Propionibacterium acnes).